Reading from the N-terminus, the 334-residue chain is Probable fructose-bisphosphate aldolase class 1 (334 aa).

Belongs to the class I fructose-bisphosphate aldolase family.

The enzyme catalyses beta-D-fructose 1,6-bisphosphate = D-glyceraldehyde 3-phosphate + dihydroxyacetone phosphate. It functions in the pathway carbohydrate degradation; glycolysis; D-glyceraldehyde 3-phosphate and glycerone phosphate from D-glucose: step 4/4. In Xanthomonas campestris pv. campestris (strain ATCC 33913 / DSM 3586 / NCPPB 528 / LMG 568 / P 25), this protein is Probable fructose-bisphosphate aldolase class 1.